The sequence spans 772 residues: 5-methyltetrahydropteroyltriglutamate--homocysteine methyltransferase (772 aa).

5-methyltetrahydropteroyltri-L-glutamate is bound by residues 24-27 (RELK) and Lys-120. The interval 404–428 (DPAVRSRTAATTDADARRSGPYPER) is disordered. L-homocysteine contacts are provided by residues 446-448 (IGS) and Glu-499. Residues 446–448 (IGS) and Glu-499 each bind L-methionine. Trp-576 is a binding site for 5-methyltetrahydropteroyltri-L-glutamate. L-homocysteine is bound at residue Asp-614. Asp-614 serves as a coordination point for L-methionine. Residue Glu-620 participates in 5-methyltetrahydropteroyltri-L-glutamate binding. Residues His-656, Cys-658, and Glu-680 each contribute to the Zn(2+) site. His-709 (proton donor) is an active-site residue. Residue Cys-741 coordinates Zn(2+).

The protein belongs to the vitamin-B12 independent methionine synthase family. Zn(2+) is required as a cofactor.

The catalysed reaction is 5-methyltetrahydropteroyltri-L-glutamate + L-homocysteine = tetrahydropteroyltri-L-glutamate + L-methionine. Its pathway is amino-acid biosynthesis; L-methionine biosynthesis via de novo pathway; L-methionine from L-homocysteine (MetE route): step 1/1. In terms of biological role, catalyzes the transfer of a methyl group from 5-methyltetrahydrofolate to homocysteine resulting in methionine formation. The chain is 5-methyltetrahydropteroyltriglutamate--homocysteine methyltransferase from Streptomyces avermitilis (strain ATCC 31267 / DSM 46492 / JCM 5070 / NBRC 14893 / NCIMB 12804 / NRRL 8165 / MA-4680).